Reading from the N-terminus, the 247-residue chain is 2,3-bisphosphoglycerate-dependent phosphoglycerate mutase (247 aa).

Residues 8–15, 21–22, R60, 87–90, K98, 114–115, and 183–184 each bind substrate; these read RHGESQWN, TG, ERHY, RR, and GN. H9 (tele-phosphohistidine intermediate) is an active-site residue. E87 (proton donor/acceptor) is an active-site residue.

This sequence belongs to the phosphoglycerate mutase family. BPG-dependent PGAM subfamily.

The enzyme catalyses (2R)-2-phosphoglycerate = (2R)-3-phosphoglycerate. Its pathway is carbohydrate degradation; glycolysis; pyruvate from D-glyceraldehyde 3-phosphate: step 3/5. Functionally, catalyzes the interconversion of 2-phosphoglycerate and 3-phosphoglycerate. This Chlorobium phaeovibrioides (strain DSM 265 / 1930) (Prosthecochloris vibrioformis (strain DSM 265)) protein is 2,3-bisphosphoglycerate-dependent phosphoglycerate mutase.